Consider the following 64-residue polypeptide: Large ribosomal subunit protein bL33c (64 aa).

It belongs to the bacterial ribosomal protein bL33 family.

The protein resides in the plastid. It is found in the chloroplast. The sequence is that of Large ribosomal subunit protein bL33c from Thalassiosira pseudonana (Marine diatom).